The chain runs to 223 residues: Deoxyribose-phosphate aldolase 1 (223 aa).

The Proton donor/acceptor role is filled by Asp-91. Lys-154 serves as the catalytic Schiff-base intermediate with acetaldehyde. The Proton donor/acceptor role is filled by Lys-183.

It belongs to the DeoC/FbaB aldolase family. DeoC type 1 subfamily.

Its subcellular location is the cytoplasm. It carries out the reaction 2-deoxy-D-ribose 5-phosphate = D-glyceraldehyde 3-phosphate + acetaldehyde. Its pathway is carbohydrate degradation; 2-deoxy-D-ribose 1-phosphate degradation; D-glyceraldehyde 3-phosphate and acetaldehyde from 2-deoxy-alpha-D-ribose 1-phosphate: step 2/2. Functionally, catalyzes a reversible aldol reaction between acetaldehyde and D-glyceraldehyde 3-phosphate to generate 2-deoxy-D-ribose 5-phosphate. The sequence is that of Deoxyribose-phosphate aldolase 1 from Bacillus licheniformis (strain ATCC 14580 / DSM 13 / JCM 2505 / CCUG 7422 / NBRC 12200 / NCIMB 9375 / NCTC 10341 / NRRL NRS-1264 / Gibson 46).